The primary structure comprises 486 residues: Malonate-semialdehyde dehydrogenase (486 aa).

NAD(+) contacts are provided by F154, K178, E181, R182, and S231. C286 (nucleophile) is an active-site residue. Residue E386 coordinates NAD(+).

Belongs to the aldehyde dehydrogenase family. IolA subfamily. As to quaternary structure, homotetramer.

The catalysed reaction is 3-oxopropanoate + NAD(+) + CoA + H2O = hydrogencarbonate + acetyl-CoA + NADH + H(+). The enzyme catalyses 2-methyl-3-oxopropanoate + NAD(+) + CoA + H2O = propanoyl-CoA + hydrogencarbonate + NADH + H(+). Its pathway is polyol metabolism; myo-inositol degradation into acetyl-CoA; acetyl-CoA from myo-inositol: step 7/7. Its function is as follows. Catalyzes the oxidation of malonate semialdehyde (MSA) and methylmalonate semialdehyde (MMSA) into acetyl-CoA and propanoyl-CoA, respectively. Is involved in a myo-inositol catabolic pathway. Bicarbonate, and not CO2, is the end-product of the enzymatic reaction. The sequence is that of Malonate-semialdehyde dehydrogenase from Bacillus cereus (strain ATCC 14579 / DSM 31 / CCUG 7414 / JCM 2152 / NBRC 15305 / NCIMB 9373 / NCTC 2599 / NRRL B-3711).